The following is a 518-amino-acid chain: Filamentous growth regulator 15 (518 aa).

Residues 1 to 41 (MESTLSVSDEKLTNSSTALNNCGDNKESSQVLTTANTTTDN) show a composition bias toward polar residues. Disordered regions lie at residues 1-63 (MEST…SKER), 75-101 (VDPN…DHGK), and 261-307 (KSRS…KQHR). A compositionally biased stretch (low complexity) spans 42-52 (QQVQPKSQHQQ). The segment covering 77–95 (PNQQSKNTVSDSVQDTTGV) has biased composition (polar residues). Residues 262-274 (SRSRSKVTKKRKV) are compositionally biased toward basic residues. The segment covering 283 to 298 (SNTATATTSVTTPDAN) has biased composition (low complexity). A C2H2-type zinc finger spans residues 374-406 (HECQLPSAEEPHKLCLRRFSRKYELIRHQETVH). The disordered stretch occupies residues 492–518 (RKSSGDDTNYMETSDLESGEEEVTFNK). A compositionally biased stretch (acidic residues) spans 505–518 (SDLESGEEEVTFNK).

It localises to the nucleus. In terms of biological role, probable transcription factor involved in the regulation of filamentous growth. The protein is Filamentous growth regulator 15 (FGR15) of Candida albicans (strain SC5314 / ATCC MYA-2876) (Yeast).